The primary structure comprises 409 residues: Broad specificity amino-acid racemase (409 aa).

The N-terminal stretch at 1-24 (MPFRRTLLAASLALLITGQAPLYA) is a signal peptide. C71 and C97 are disulfide-bonded. The Proton acceptor role is filled by K75. At K75 the chain carries N6-(pyridoxal phosphate)lysine. R174 provides a ligand contact to substrate. Catalysis depends on Y301, which acts as the Proton acceptor. M349 is a substrate binding site.

It belongs to the alanine racemase family. Bsr subfamily. The cofactor is pyridoxal 5'-phosphate.

The protein resides in the periplasm. The enzyme catalyses an L-alpha-amino acid = a D-alpha-amino acid. The catalysed reaction is L-lysine = D-lysine. It catalyses the reaction L-arginine = D-arginine. It carries out the reaction L-glutamine = D-glutamine. Its function is as follows. Amino-acid racemase able to utilize a broad range of substrates. Reversibly racemizes 9 of the 19 natural chiral amino acids known, including both positively charged amino acids (Lys, Arg and His) and non-beta-branched aliphatic amino acids (Ala, Leu, Met, Ser, Gln and Asn). Among these amino acids, activity is the highest with lysine and arginine, and poor or very poor with the others. Plays a primary role in the catabolism of basic amino acid, that allows P.putida strain KT2440 to grow on L-Lys and L-Arg as the sole source of carbon and nitrogen, through conversion to their respective D-enantiomers. The chain is Broad specificity amino-acid racemase from Pseudomonas putida (strain ATCC 47054 / DSM 6125 / CFBP 8728 / NCIMB 11950 / KT2440).